Reading from the N-terminus, the 706-residue chain is Elongation factor G (706 aa).

The 290-residue stretch at 8–297 folds into the tr-type G domain; sequence SYVRNIGIGA…AVVDYLPSPN (290 aa). GTP-binding positions include 17-24, 95-99, and 149-152; these read AHIDAGKT, DTPGH, and NKMD.

It belongs to the TRAFAC class translation factor GTPase superfamily. Classic translation factor GTPase family. EF-G/EF-2 subfamily.

The protein localises to the cytoplasm. Functionally, catalyzes the GTP-dependent ribosomal translocation step during translation elongation. During this step, the ribosome changes from the pre-translocational (PRE) to the post-translocational (POST) state as the newly formed A-site-bound peptidyl-tRNA and P-site-bound deacylated tRNA move to the P and E sites, respectively. Catalyzes the coordinated movement of the two tRNA molecules, the mRNA and conformational changes in the ribosome. The protein is Elongation factor G of Orientia tsutsugamushi (strain Ikeda) (Rickettsia tsutsugamushi).